We begin with the raw amino-acid sequence, 166 residues long: Small ribosomal subunit protein uS5 (166 aa).

In terms of domain architecture, S5 DRBM spans 11–74 (LQEKLIAVNR…EKARRNMINV (64 aa)).

Belongs to the universal ribosomal protein uS5 family. In terms of assembly, part of the 30S ribosomal subunit. Contacts proteins S4 and S8.

Functionally, with S4 and S12 plays an important role in translational accuracy. Located at the back of the 30S subunit body where it stabilizes the conformation of the head with respect to the body. The chain is Small ribosomal subunit protein uS5 from Actinobacillus pleuropneumoniae serotype 5b (strain L20).